The following is a 69-amino-acid chain: Large ribosomal subunit protein uL29 (69 aa).

The protein belongs to the universal ribosomal protein uL29 family.

This Oenococcus oeni (strain ATCC BAA-331 / PSU-1) protein is Large ribosomal subunit protein uL29.